Reading from the N-terminus, the 490-residue chain is Lysine--tRNA ligase (490 aa).

Mg(2+)-binding residues include Glu-398 and Glu-405.

Belongs to the class-II aminoacyl-tRNA synthetase family. As to quaternary structure, homodimer. Mg(2+) is required as a cofactor.

The protein resides in the cytoplasm. It carries out the reaction tRNA(Lys) + L-lysine + ATP = L-lysyl-tRNA(Lys) + AMP + diphosphate. The polypeptide is Lysine--tRNA ligase (Metamycoplasma arthritidis (strain 158L3-1) (Mycoplasma arthritidis)).